Reading from the N-terminus, the 3926-residue chain is Hybrid PKS-NRPS synthetase LUC5 (3926 aa).

The Ketosynthase family 3 (KS3) domain maps to 8 to 439 (REPIAIVGTA…GTNAHAIIES (432 aa)). Residues Cys181, His318, and His359 each act as for beta-ketoacyl synthase activity in the active site. Residues 545–863 (VFTGQGAQWP…QGALTRNVHD (319 aa)) form a malonyl-CoA:ACP transacylase (MAT) domain region. The segment at 932 to 1065 (HPLLGTRSTE…GHLRVDFGSE (134 aa)) is N-terminal hotdog fold. The segment at 932–1225 (HPLLGTRSTE…GLTCTSLLRP (294 aa)) is dehydratase (DH) domain. Residues 932-1228 (HPLLGTRSTE…CTSLLRPGPS (297 aa)) enclose the PKS/mFAS DH domain. His964 (proton acceptor; for dehydratase activity) is an active-site residue. The segment at 1081–1228 (LTSVNIERFY…CTSLLRPGPS (148 aa)) is C-terminal hotdog fold. The active-site Proton donor; for dehydratase activity is Asp1138. The tract at residues 1344–1572 (IRAVGENLTE…VNDFYDPSKY (229 aa)) is C-methyltransferase (CMeT) domain. The ketoreductase (KR) domain 1 stretch occupies residues 2091-2265 (TYLLAGCTGG…AASVIHIGMI (175 aa)). The Carrier 1 domain occupies 2371-2448 (EMLEVVEEEF…EICSTAVASL (78 aa)). The residue at position 2408 (Ser2408) is an O-(pantetheine 4'-phosphoryl)serine. The span at 2474–2506 (VSGNGSSSSRAPTEFNSSTLKSGAQSTQGTSVS) shows a compositional bias: polar residues. Residues 2474 to 2518 (VSGNGSSSSRAPTEFNSSTLKSGAQSTQGTSVSGDKDTNSVDGSA) are disordered. Positions 2507 to 2518 (GDKDTNSVDGSA) are enriched in basic and acidic residues. The tract at residues 2525-2810 (PLSFAQERIW…VNLLPLRFQL (286 aa)) is condensation. An adenylation region spans residues 2979–3389 (DWVKRQPDAI…RIAGDSQIKL (411 aa)). The Carrier 2 domain maps to 3501 to 3580 (ETLTTTQERL…GMAAKIDGST (80 aa)). At Ser3540 the chain carries O-(pantetheine 4'-phosphoryl)serine. Positions 3619–3840 (LTGATGFLGL…DFVPVEQVAD (222 aa)) are thiolester reductase (TE) domain.

The protein in the C-terminal section; belongs to the NRP synthetase family.

It functions in the pathway mycotoxin biosynthesis. In terms of biological role, hybrid PKS-NRPS synthetase; part of the gene cluster that mediates the biosynthesis of the mycotoxin lucilactaene and the lucilactaene-related compound NG-391 that act as cell cycle inhibitors with potent growth inhibitory activity against malarial parasites, moderate growth inhibitory activity against cancer cells, and no activity against bacteria and fungi. The hybrid PKS-NRPS synthetase LUC5 is responsible for the condensation of one acetyl-coenzyme A (CoA) unit with six malonyl-CoA units and the amide linkage of the arising heptaketide and homoserine, subsequently releasing the first intermediate prelucilactaene B, as an alcohol with an open ring structure. Lucilactaene and NG-391 lack the 7-methyl group present in fusarins which is inserted in fusarins by the C-methyltransferase (CMeT) domain of the fusarin synthetase FUS1, suggesting that the CMet domain of LUC5 does not methylate this position. Within the pathway, both the cytochrome P450 monooxygenase LUC2 and the hydrolase LUC6 function in parallel in modification of prelucilactaene B. LUC6 may catalyze the 2-pyrrolidone ring formation to form prelucilactaene C from prelucilactaene B, followed by C-15 hydroxylation by the same enzyme to give prelucilactaene D, which is then converted to prelucilactaene E by epoxidation, and finally to prelucilactaene F by cyclization. Prelucilactane D, prelucilactaene E, and prelucilactaene F can be converted to dihydrolucilactaene, NG391, and lucilactaene, respectively, via C-20 methyl group hydroxylation by the cytochrome P450 monooxygenase LUC2. However, LUC2, unlike FUS8 in fusarin C biosynthesis, is not enough for the full oxidation of the C-20 methyl group into carboxylic acid, which is a prerequisite for the final methylation step. The aldehyde dehydrogenase LUC3 is involved in the biosynthesis by further oxidation of the C-20 alcoholic analog prelucilactaene G into a carboxylic derivative. This unidentified carboxylic derivative may be converted to demethyllucilactaene. As the last step, the methyltransferase LUC1 methylates the hydroxyl group at C-21 of demethyllucilactaene to generate lucilactaene. The polypeptide is Hybrid PKS-NRPS synthetase LUC5 (Fusarium sp).